Reading from the N-terminus, the 213-residue chain is Inactive ribonuclease-like protein 10 (213 aa).

An N-terminal signal peptide occupies residues 1-24 (MKLTLVQFFFMMLLLLLGLGVGLG). An N-linked (GlcNAc...) asparagine glycan is attached at Asn128.

This sequence belongs to the pancreatic ribonuclease family. In terms of processing, the N-terminus is blocked. Glycosylated. In terms of tissue distribution, male-specific expression in proximal caput of the epididymis.

It is found in the secreted. In terms of biological role, secreted proximal epididymal protein required for post-testicular sperm maturation and male fertility. May be involved in sperm adhesion to the egg zona pellucida. Does not have ribonuclease activity. The protein is Inactive ribonuclease-like protein 10 (RNASE10) of Sus scrofa (Pig).